Consider the following 553-residue polypeptide: COP9 signalosome complex subunit 10 (553 aa).

Over residues 21-46 the composition is skewed to acidic residues; sequence AEMEEDSDEMGVYEEETSQGAEEEVP. The interval 21–47 is disordered; that stretch reads AEMEEDSDEMGVYEEETSQGAEEEVPL. A PCI domain is found at 298-474; sequence LRTHFSACLQ…DYVYFGDEPR (177 aa).

As to quaternary structure, component of a COP9 signalosome-like (CSN) complex.

The protein resides in the cytoplasm. It is found in the nucleus. Functionally, component of the COP9 signalosome (CSN) complex that acts as an regulator of the ubiquitin (Ubl) conjugation pathway by mediating the deneddylation of the cullin subunit of SCF-type E3 ubiquitin-protein ligase complexes. The CSN complex is involved in the regulation of the mating pheromone response. The protein is COP9 signalosome complex subunit 10 (RRI2) of Eremothecium gossypii (strain ATCC 10895 / CBS 109.51 / FGSC 9923 / NRRL Y-1056) (Yeast).